A 554-amino-acid polypeptide reads, in one-letter code: Probable phospholipase D F09G2.8 (554 aa).

Residues 1-123 are Cytoplasmic-facing; the sequence is MPLRLINFRQ…GNSRNRIIKP (123 aa). The helical; Signal-anchor for type II membrane protein transmembrane segment at 124-144 threads the bilayer; the sequence is ACVPISIVSLFIIALVFLPLF. The Extracellular segment spans residues 145-554; that stretch reads NEEDLASPIK…DWNSEYSKDL (410 aa). N-linked (GlcNAc...) asparagine glycosylation is found at Asn181, Asn208, Asn244, and Asn266. The PLD phosphodiesterase 1 domain maps to 272–299; that stretch reads GSGIIHTKFILSDIATLYIGSANMDWKS. Active-site residues include His277, Lys279, and Asp284. Residues Asn333, Asn350, Asn468, and Asn513 are each glycosylated (N-linked (GlcNAc...) asparagine). In terms of domain architecture, PLD phosphodiesterase 2 spans 492–518; it reads FTRVNHAKYMVTEDIAYIGTSNWSGDY.

Belongs to the phospholipase D family.

The protein resides in the membrane. The catalysed reaction is a 1,2-diacyl-sn-glycero-3-phosphocholine + H2O = a 1,2-diacyl-sn-glycero-3-phosphate + choline + H(+). The sequence is that of Probable phospholipase D F09G2.8 from Caenorhabditis elegans.